Here is a 1402-residue protein sequence, read N- to C-terminus: Baculoviral IAP repeat-containing protein 1g (1402 aa).

BIR repeat units follow at residues 60 to 127, 159 to 227, and 278 to 345; these read EAKR…CEFL, EEAR…CEFL, and EELR…CVFL. Residues Cys-315, Cys-318, His-335, and Cys-342 each coordinate Zn(2+). Positions 464-759 constitute an NACHT domain; the sequence is SVMCVEGEAG…EFLAAVRLTE (296 aa). An ATP-binding site is contributed by Lys-476.

Its function is as follows. Prevents motor-neuron apoptosis induced by a variety of signals. The sequence is that of Baculoviral IAP repeat-containing protein 1g (Naip7) from Mus musculus (Mouse).